The primary structure comprises 321 residues: MNRPERLQPGVKLRDADKVSRIPVKIVPSERDTMLRKPDWLRVKLPASNQRILDIKQALRSNGLHSVCEEASCPNLAECFNHGTATFMILGAICTRRCPFCDVAHGRPLKPDAEEPVKLAQTIRDMKLKYVVITSVDRDDLRDGGAQHFADCIREIRKLNPAIKIEILVPDFRGRIDAALDILATEPPDVFNHNLETAPMHYRKARPGANYQWSLDLLKRFKERHPNVPTKSGLMMGLGETNEEIAQVLRDLREHKVEMLTLGQYLQPSKFHLPVERYVPPAEFDELKALADELGFTHAACGPLVRSSYHADLQAQGKEVK.

The [4Fe-4S] cluster site is built by Cys68, Cys73, Cys79, Cys94, Cys98, Cys101, and Ser308. The Radical SAM core domain maps to 80-297; that stretch reads FNHGTATFMI…KALADELGFT (218 aa).

It belongs to the radical SAM superfamily. Lipoyl synthase family. [4Fe-4S] cluster is required as a cofactor.

It is found in the cytoplasm. It carries out the reaction [[Fe-S] cluster scaffold protein carrying a second [4Fe-4S](2+) cluster] + N(6)-octanoyl-L-lysyl-[protein] + 2 oxidized [2Fe-2S]-[ferredoxin] + 2 S-adenosyl-L-methionine + 4 H(+) = [[Fe-S] cluster scaffold protein] + N(6)-[(R)-dihydrolipoyl]-L-lysyl-[protein] + 4 Fe(3+) + 2 hydrogen sulfide + 2 5'-deoxyadenosine + 2 L-methionine + 2 reduced [2Fe-2S]-[ferredoxin]. It participates in protein modification; protein lipoylation via endogenous pathway; protein N(6)-(lipoyl)lysine from octanoyl-[acyl-carrier-protein]: step 2/2. Catalyzes the radical-mediated insertion of two sulfur atoms into the C-6 and C-8 positions of the octanoyl moiety bound to the lipoyl domains of lipoate-dependent enzymes, thereby converting the octanoylated domains into lipoylated derivatives. This is Lipoyl synthase from Shewanella putrefaciens (strain CN-32 / ATCC BAA-453).